Here is a 2098-residue protein sequence, read N- to C-terminus: Unconventional myosin heavy chain 6 (2098 aa).

Residues 62–732 enclose the Myosin motor domain; sequence QGVEDMCQLG…HDLVLEQEYY (671 aa). 155–162 provides a ligand contact to ATP; that stretch reads GESGAGKT. Actin-binding stretches follow at residues 609-631 and 711-725; these read LEQL…KPNE and QLGK…KHDL. IQ domains lie at 735–757, 758–787, and 804–833; these read LKDK…DFEK, QRQA…GFSR, and LRKT…RGEK. A disordered region spans residues 860-898; sequence FLPSDGKDSGNENDSADSSRRGSYSRLHTSPVMPPANIP. The region spanning 929–1168 is the MyTH4 1 domain; the sequence is HVKKPLKTAL…PSYVELQANK (240 aa). Residues 1171-1211 form the Ras-associating domain; that stretch reads KPVVLAVTFMDGSVKTLCADSATTAAELCKQLAEKVGLTNS. Positions 1173 to 1481 constitute an FERM 1 domain; sequence VVLAVTFMDG…MFLEGLKKRS (309 aa). The SH3 domain maps to 1479–1547; that stretch reads KRSRYLVAIK…RAENVYVLPT (69 aa). Residues 1624–1772 enclose the MyTH4 2 domain; it reads FSREHIDQPL…PHLVEVEAIQ (149 aa). The region spanning 1778-2086 is the FERM 2 domain; that stretch reads IFHKVFFPDN…SYISLLISNQ (309 aa).

It belongs to the TRAFAC class myosin-kinesin ATPase superfamily. Myosin family. In terms of assembly, interacts with unc-98.

The protein localises to the cytoplasm. Myosins are actin-based motor molecules with ATPase activity. Unconventional myosins serve in intracellular movements. Their highly divergent tails are presumed to bind to membranous compartments, which would be moved relative to actin filaments. The polypeptide is Unconventional myosin heavy chain 6 (Caenorhabditis elegans).